We begin with the raw amino-acid sequence, 125 residues long: Small ribosomal subunit protein uS12m (125 aa).

Belongs to the universal ribosomal protein uS12 family.

The protein resides in the mitochondrion. Protein S12 is involved in the translation initiation step. The sequence is that of Small ribosomal subunit protein uS12m (RPS12) from Allium cepa (Onion).